We begin with the raw amino-acid sequence, 111 residues long: Rubredoxin (111 aa).

Residues 11 to 62 (LDRFECRSCGYVYEPEKGDNKHDIAPETPFAELPINWRCPVCTAKKAAFTNI) form the Rubredoxin-like domain. Fe cation contacts are provided by Cys16, Cys19, Cys49, and Cys52.

Belongs to the rubredoxin family. It depends on Fe(3+) as a cofactor.

Rubredoxin is a small nonheme, iron protein lacking acid-labile sulfide. Its single Fe, chelated to 4 Cys, functions as an electron acceptor and may also stabilize the conformation of the molecule. Could be involved in hydrogenase-linked redox processes. The chain is Rubredoxin (rub) from Nostoc sp. (strain PCC 7120 / SAG 25.82 / UTEX 2576).